We begin with the raw amino-acid sequence, 122 residues long: Lectin A (122 aa).

Tyrosine 38 is a Ca(2+) binding site. An alpha-D-galactoside is bound by residues glutamate 44, glutamine 57, and aspartate 96. Residues aspartate 96, threonine 100, aspartate 103, and asparagine 104 each contribute to the Ca(2+) site. Aspartate 103 contributes to the an alpha-D-galactoside binding site.

This sequence belongs to the LecA/PllA lectin family. In terms of assembly, homotetramer.

Lectin that specifically binds alpha-galactoside-terminating glycoconjugates. Shows high apparent binding to the alpha-Gal epitope (Gal-alpha-1,3-Gal-beta-1,4-GlcNAc terminating glycans) as well as to Gal-alpha-1,4-GlcNAc and Gal-alpha-1,3-GalNAc. Gal-alpha-1,3-GalNAc may be one natural ligand bound by PllA both in the nematode symbiont and in infected insects. In Photorhabdus laumondii subsp. laumondii (strain DSM 15139 / CIP 105565 / TT01) (Photorhabdus luminescens subsp. laumondii), this protein is Lectin A.